Reading from the N-terminus, the 186-residue chain is Peptidyl-tRNA hydrolase (186 aa).

Tyrosine 14 is a tRNA binding site. Histidine 19 acts as the Proton acceptor in catalysis. TRNA contacts are provided by phenylalanine 64, asparagine 66, and asparagine 112.

Belongs to the PTH family. In terms of assembly, monomer.

Its subcellular location is the cytoplasm. It catalyses the reaction an N-acyl-L-alpha-aminoacyl-tRNA + H2O = an N-acyl-L-amino acid + a tRNA + H(+). In terms of biological role, hydrolyzes ribosome-free peptidyl-tRNAs (with 1 or more amino acids incorporated), which drop off the ribosome during protein synthesis, or as a result of ribosome stalling. Functionally, catalyzes the release of premature peptidyl moieties from peptidyl-tRNA molecules trapped in stalled 50S ribosomal subunits, and thus maintains levels of free tRNAs and 50S ribosomes. The chain is Peptidyl-tRNA hydrolase from Anaplasma marginale (strain St. Maries).